A 206-amino-acid polypeptide reads, in one-letter code: Small ribosomal subunit protein uS5 (206 aa).

Polar residues predominate over residues 1–15; sequence MTDTPTKQEIQSKND. Positions 1-50 are disordered; that stretch reads MTDTPTKQEIQSKNDNVPAATPVEQKKNNRNDRKRNRRGDSKNLERDSDW. The span at 38–50 shows a compositional bias: basic and acidic residues; sequence RGDSKNLERDSDW. The S5 DRBM domain maps to 50–113; it reads WQERVVQIRR…SDGKKNLVRV (64 aa).

It belongs to the universal ribosomal protein uS5 family. Part of the 30S ribosomal subunit. Contacts proteins S4 and S8.

Functionally, with S4 and S12 plays an important role in translational accuracy. Its function is as follows. Located at the back of the 30S subunit body where it stabilizes the conformation of the head with respect to the body. The polypeptide is Small ribosomal subunit protein uS5 (Prochlorococcus marinus (strain AS9601)).